Here is a 237-residue protein sequence, read N- to C-terminus: MWTMFNNWKIFEDNLGFVPSEEIKDKLNEYYKILVEENLKYNLTRITNEEDVYEKHFLDSLLFTKETKIDNQKIIDIGTGPGFPGIVLKIFFPETDITLIDSNNKKINFLNIVIKKLNLKQIEAKHARAEELARIENEKYDIAISRAVAYLDVILELAVRFLKIQGKLILLKGPRADEEIKNSKNIDQKLKIKLTNKQSLADTGFGERINLFYEKEKSTPELYPREYAKIVKESGKK.

S-adenosyl-L-methionine is bound by residues Gly-78, Phe-83, 129 to 130 (AE), and Arg-146.

Belongs to the methyltransferase superfamily. RNA methyltransferase RsmG family.

Its subcellular location is the cytoplasm. In terms of biological role, specifically methylates the N7 position of a guanine in 16S rRNA. The polypeptide is Ribosomal RNA small subunit methyltransferase G (Mesoplasma florum (strain ATCC 33453 / NBRC 100688 / NCTC 11704 / L1) (Acholeplasma florum)).